We begin with the raw amino-acid sequence, 393 residues long: Squamosa promoter-binding-like protein 17 (393 aa).

Low complexity predominate over residues 40–49; it reads AAAVESSSTS. A disordered region spans residues 40–67; it reads AAAVESSSTSSGGGGKKGKGVAAAAAPP. An SBP-type zinc finger spans residues 71-148; the sequence is PPRCQVEGCG…AGHNERRRKP (78 aa). Zn(2+) is bound by residues C74, C79, C96, H99, C115, C118, H122, and C134. Positions 131 to 147 match the Bipartite nuclear localization signal motif; that stretch reads KKSCRRRLAGHNERRRK. Residues 137-148 show a composition bias toward basic residues; sequence RLAGHNERRRKP. Disordered stretches follow at residues 137-158, 273-301, and 317-393; these read RLAG…SRYG, WDTT…GNNP, and GWNS…NWSL. 2 stretches are compositionally biased toward polar residues: residues 273–293 and 380–393; these read WDTT…STAS and GAFS…NWSL.

As to expression, expressed in young panicles.

Its subcellular location is the nucleus. Trans-acting factor that binds specifically to the consensus nucleotide sequence 5'-TNCGTACAA-3'. May be involved in panicle development. The chain is Squamosa promoter-binding-like protein 17 (SPL17) from Oryza sativa subsp. japonica (Rice).